Here is a 143-residue protein sequence, read N- to C-terminus: Alpha-amylase/trypsin inhibitor CM16 (143 aa).

The first 24 residues, 1-24, serve as a signal peptide directing secretion; that stretch reads MASKSNCVLLLAAVLVSIFAAVAA.

The protein belongs to the protease inhibitor I6 (cereal trypsin/alpha-amylase inhibitor) family. As to quaternary structure, subunit of the tetrameric inhibitor. In terms of processing, five disulfide bonds, which are essential for the inhibitor activity, are probably present. Developing endosperm.

It is found in the secreted. Its function is as follows. Alpha-amylase/trypsin inhibitor. It could be involved in insect defense mechanisms. In Triticum aestivum (Wheat), this protein is Alpha-amylase/trypsin inhibitor CM16.